The primary structure comprises 321 residues: Quinol oxidase subunit 2 (321 aa).

The N-terminal stretch at 1-25 is a signal peptide; sequence MIFLFRALKPLLVLALLTVVFVLGG. Cys26 is lipidated: N-palmitoyl cysteine. A lipid anchor (S-diacylglycerol cysteine) is attached at Cys26. 2 helical membrane-spanning segments follow: residues 49–69 and 90–110; these read SIGF…IILV and TFLE…LSVP. Residues 294–321 are disordered; sequence QAVSPHSKTDPFENVKENEFKKSDDTEE. Residues 300–321 show a composition bias toward basic and acidic residues; that stretch reads SKTDPFENVKENEFKKSDDTEE.

It belongs to the cytochrome c oxidase subunit 2 family.

The protein resides in the cell membrane. The catalysed reaction is 2 a quinol + O2 = 2 a quinone + 2 H2O. Its function is as follows. Catalyzes quinol oxidation with the concomitant reduction of oxygen to water. Major component for energy conversion during vegetative growth. Subunit II transfers the electrons from a quinol to the binuclear center of the catalytic subunit I. This chain is Quinol oxidase subunit 2 (qoxA), found in Bacillus spizizenii (strain ATCC 23059 / NRRL B-14472 / W23) (Bacillus subtilis subsp. spizizenii).